Here is an 886-residue protein sequence, read N- to C-terminus: General transcription factor 3C polypeptide 3 (886 aa).

The tract at residues 1–121 (MSGFSPELID…TPEQPTAGDV (121 aa)) is disordered. Residue serine 2 is modified to N-acetylserine. Residues 12-44 (LEGKISFEEFERRREERKTREKKSLQEKGKLSA) show a composition bias toward basic and acidic residues. A Phosphoserine modification is found at serine 43. Polar residues predominate over residues 53–63 (VPSSSGINSTK). Acidic residues predominate over residues 92–113 (ENEDDEEEEEEEEEEEEEEETP). 11 TPR repeats span residues 149 to 182 (LRGL…APLA), 183 to 216 (YEPF…NPSD), 217 to 250 (TEEW…EPTN), 252 to 284 (RYLW…LSPS), 290 to 323 (MQLA…HQGL), 326 to 361 (MEDV…EKKT), 421 to 454 (GDLY…ERYN), 456 to 489 (AVVW…APLH), 491 to 523 (DARI…DTLA), 733 to 766 (HALC…HPDE), and 811 to 844 (QESF…PPLV). Position 282 is a phosphoserine (serine 282).

Part of the TFIIIC subcomplex TFIIIC2, consisting of six subunits, GTF3C1, GTF3C2, GTF3C3, GTF3C4, GTF3C5 and GTF3C6. Interacts with BRF1 and TBP.

It is found in the nucleus. Functionally, involved in RNA polymerase III-mediated transcription. Integral, tightly associated component of the DNA-binding TFIIIC2 subcomplex that directly binds tRNA and virus-associated RNA promoters. This Homo sapiens (Human) protein is General transcription factor 3C polypeptide 3 (GTF3C3).